The chain runs to 407 residues: Lysosome-associated membrane glycoprotein 1 (407 aa).

Residues 1–21 form the signal peptide; sequence MAAPGARRPLLLLLLAGLAHS. The segment at 22 to 189 is first lumenal domain; it reads APALFEVKDN…SKEETRCPQD (168 aa). At 22–371 the chain is on the lumenal side; it reads APALFEVKDN…VEECVQDGNN (350 aa). N-linked (GlcNAc...) asparagine glycans are attached at residues Asn32, Asn59, Asn71, Asn79, Asn102, Asn116, Asn125, Asn145, Asn160, and Asn178. Cysteines 36 and 75 form a disulfide. Cys150 and Cys186 are oxidised to a cystine. The disordered stretch occupies residues 180 to 211; sequence SKEETRCPQDQPSPTTGPPSPSPPLVPTNPSV. A hinge region spans residues 190–219; the sequence is QPSPTTGPPSPSPPLVPTNPSVSKYNVTGD. The segment covering 194-206 has biased composition (pro residues); that stretch reads TTGPPSPSPPLVP. 8 N-linked (GlcNAc...) asparagine glycosylation sites follow: Asn215, Asn220, Asn233, Asn241, Asn271, Asn283, Asn297, and Asn312. The tract at residues 220 to 371 is second lumenal domain; the sequence is NGTCLLASMA…VEECVQDGNN (152 aa). Cys223 and Cys260 form a disulfide bridge. The cysteines at positions 328 and 365 are disulfide-linked. Residues 372–395 traverse the membrane as a helical segment; sequence MLIPIAVGGALAGLVLIVLIAYLI. The Cytoplasmic portion of the chain corresponds to 396–407; the sequence is GRKRSHAGYQTI.

It belongs to the LAMP family. In terms of assembly, interacts with ABCB9; this interaction strongly stabilizes ABCB9 and protects ABCB9 against lysosomal degradation. Interacts with FURIN. Interacts with TMEM175; inhibiting the proton channel activity of TMEM175. Post-translationally, O- and N-glycosylated; some of the N-glycans attached to LAMP-1 are polylactosaminoglycans.

It is found in the lysosome membrane. The protein localises to the endosome membrane. The protein resides in the late endosome membrane. It localises to the cell membrane. Its subcellular location is the cytolytic granule membrane. Its function is as follows. Lysosomal membrane glycoprotein which plays an important role in lysosome biogenesis, lysosomal pH regulation, autophagy and cholesterol homeostasis. Acts as an important regulator of lysosomal lumen pH regulation by acting as a direct inhibitor of the proton channel TMEM175, facilitating lysosomal acidification for optimal hydrolase activity. Also plays an important role in NK-cells cytotoxicity. Mechanistically, participates in cytotoxic granule movement to the cell surface and perforin trafficking to the lytic granule. In addition, protects NK-cells from degranulation-associated damage induced by their own cytotoxic granule content. Presents carbohydrate ligands to selectins. The polypeptide is Lysosome-associated membrane glycoprotein 1 (Lamp1) (Rattus norvegicus (Rat)).